Reading from the N-terminus, the 117-residue chain is Neurotoxic enhancer CSTX-13 (117 aa).

An N-terminal signal peptide occupies residues 1–20; it reads MKVLVIFAVLSLVIFSNCSA. The propeptide occupies 21–47; that stretch reads ETDEDFFGEESFEADDIIPFIAKEQVR. Cystine bridges form between Cys-50-Cys-65, Cys-57-Cys-74, Cys-64-Cys-95, and Cys-76-Cys-93. Residues 82-87 constitute a propeptide that is removed on maturation; that stretch reads RSETAR. Thr-116 bears the Threonine amide mark.

It belongs to the neurotoxin 19 (CSTX) family. 12 subfamily. Heterodimer of A and B chains; disulfide-linked. Interacts with CSTX-1 (AC P81694) (Kd=430 nM), and with CSTX-9 (AC P58604) (Kd=370 nM). As to expression, expressed by the venom gland.

It localises to the secreted. The protein localises to the target cell membrane. Its function is as follows. Synergistic toxin that induces or increases a cytolytic effect when combined with CSTX-1 (AC P81694) or CSTX-9 (AC P58604). When alone, has a weak insecticidal activity, with an unknown molecular target. This Cupiennius salei (American wandering spider) protein is Neurotoxic enhancer CSTX-13.